The chain runs to 71 residues: UPF0346 protein str0441 (71 aa).

The protein belongs to the UPF0346 family.

This Streptococcus thermophilus (strain CNRZ 1066) protein is UPF0346 protein str0441.